Consider the following 157-residue polypeptide: Cyclic pyranopterin monophosphate synthase (157 aa).

Substrate contacts are provided by residues 74–76 (MCH) and 112–113 (ME). Residue Asp-127 is part of the active site.

Belongs to the MoaC family. In terms of assembly, homohexamer; trimer of dimers.

The enzyme catalyses (8S)-3',8-cyclo-7,8-dihydroguanosine 5'-triphosphate = cyclic pyranopterin phosphate + diphosphate. The protein operates within cofactor biosynthesis; molybdopterin biosynthesis. Its function is as follows. Catalyzes the conversion of (8S)-3',8-cyclo-7,8-dihydroguanosine 5'-triphosphate to cyclic pyranopterin monophosphate (cPMP). This is Cyclic pyranopterin monophosphate synthase from Campylobacter jejuni subsp. jejuni serotype O:6 (strain 81116 / NCTC 11828).